A 1050-amino-acid polypeptide reads, in one-letter code: Self-sufficient cytochrome P450 monooxygenase CYP505E5 (1050 aa).

Cys-405 lines the heme pocket. The disordered stretch occupies residues 461-495 (TATGLSRRSMLVARDGSSEESSNHPAEARGDHAPA). Residues 500-641 (VSFFYGSNSG…DLEAWEETSL (142 aa)) enclose the Flavodoxin-like domain. FMN is bound by residues 506–510 (SNSGT) and 585–617 (VFGC…TRLA). An FAD-binding FR-type domain is found at 679–907 (KGLIEAKVTA…RPAKETFHLP (229 aa)).

The protein in the N-terminal section; belongs to the cytochrome P450 family. FAD is required as a cofactor. Requires FMN as cofactor. Heme serves as cofactor.

It carries out the reaction 2 oxidized [cytochrome P450] + NADPH = 2 reduced [cytochrome P450] + NADP(+) + H(+). The catalysed reaction is an organic molecule + reduced [NADPH--hemoprotein reductase] + O2 = an alcohol + oxidized [NADPH--hemoprotein reductase] + H2O + H(+). The enzyme catalyses dodecanoate + reduced [NADPH--hemoprotein reductase] + O2 = 5-hydroxydodecanoate + oxidized [NADPH--hemoprotein reductase] + H2O + H(+). It catalyses the reaction tetradecanoate + reduced [NADPH--hemoprotein reductase] + O2 = 7-hydroxytetradecanoate + oxidized [NADPH--hemoprotein reductase] + H2O + H(+). It carries out the reaction dodecan-1-ol + reduced [NADPH--hemoprotein reductase] + O2 = 1,5-dodecanediol + oxidized [NADPH--hemoprotein reductase] + H2O + H(+). The catalysed reaction is dodecan-1-ol + reduced [NADPH--hemoprotein reductase] + O2 = 1,4-dodecanediol + oxidized [NADPH--hemoprotein reductase] + H2O + H(+). The enzyme catalyses dodecan-1-ol + reduced [NADPH--hemoprotein reductase] + O2 = 1,6-dodecanediol + oxidized [NADPH--hemoprotein reductase] + H2O + H(+). Self-sufficient cytochrome P450 monooxygenase that catalyzes the regioselective in-chain hydroxylation of alkanes, fatty alcohols, and fatty acids at the omega-7 position. Performs hydroxylation of C10-C16 n-alkanes and C12 and C14 fatty alcohols; and thereby enables the one step biocatalytic synthesis of rare alcohols such as 5-dodecanol and 7-tetradecanol. Converts 1-dodecanol into 1,5-dodecanediol as major product with very little sub-terminally hydroxylated products with the 1,4-dodecanediol and 1,6-dodecanediol more abundant. Converts dodecanoic acid to 5-hydroxydodecanoic acid which can be further converted into delta-dodecalactone by lactonization of the 5-hydroxy acid at low pH. Also gives sub-terminal hydroxylation of dodecanoic acid with 9-hydroxydodecanoic acid being the second most abundant product. The polypeptide is Self-sufficient cytochrome P450 monooxygenase CYP505E5 (Aspergillus kawachii (strain NBRC 4308) (White koji mold)).